The primary structure comprises 421 residues: C2H2 type master regulator of conidiophore development brlA (421 aa).

2 C2H2-type zinc fingers span residues 309–333 (FKCK…MKSH) and 339–364 (HVCW…TKTH). Residues 379–421 (ESSPDYDPDFRGQLTPDGLPIRGSTLDDPMPNSREYSVDGLDD) are disordered.

Its subcellular location is the nucleus. Its function is as follows. BrlA, abaA and wetA are pivotal regulators of conidiophore development and conidium maturation. They act individually and together to regulate their own expression and that of numerous other sporulation-specific genes. Binds promoters of target genes at brlA response elements (BREs) containing the conserved sequence 5'-(C/A)(A/G)AGGG(G/A)-3'. Required for conidiophores formation. Controls expression of abaA. The protein is C2H2 type master regulator of conidiophore development brlA of Aspergillus oryzae (strain ATCC 42149 / RIB 40) (Yellow koji mold).